We begin with the raw amino-acid sequence, 318 residues long: Electron transfer flavoprotein subunit alpha (318 aa).

257–285 serves as a coordination point for FAD; sequence LYIALGISGAIQHRAGMQTSKTIVAVNKD.

Belongs to the ETF alpha-subunit/FixB family. Heterodimer of an alpha and a beta subunit. Requires FAD as cofactor.

Its function is as follows. The electron transfer flavoprotein serves as a specific electron acceptor for other dehydrogenases. It transfers the electrons to the main respiratory chain via ETF-ubiquinone oxidoreductase (ETF dehydrogenase). In Mycobacterium tuberculosis (strain CDC 1551 / Oshkosh), this protein is Electron transfer flavoprotein subunit alpha (etfA).